A 243-amino-acid chain; its full sequence is Small ribosomal subunit protein uS3 (243 aa).

Residues 39 to 110 enclose the KH type-2 domain; it reads IRGFIQKKYA…QVRINVVEIE (72 aa). The tract at residues 215 to 243 is disordered; that stretch reads DQPLPVGASPRRKGSRRPQQFEDRSNDGK. A compositionally biased stretch (basic and acidic residues) spans 233 to 243; the sequence is QQFEDRSNDGK.

The protein belongs to the universal ribosomal protein uS3 family. In terms of assembly, part of the 30S ribosomal subunit. Forms a tight complex with proteins S10 and S14.

Its function is as follows. Binds the lower part of the 30S subunit head. Binds mRNA in the 70S ribosome, positioning it for translation. This is Small ribosomal subunit protein uS3 from Prochlorococcus marinus (strain MIT 9211).